Reading from the N-terminus, the 130-residue chain is Large ribosomal subunit protein bL12 (130 aa).

It belongs to the bacterial ribosomal protein bL12 family. In terms of assembly, homodimer. Part of the ribosomal stalk of the 50S ribosomal subunit. Forms a multimeric L10(L12)X complex, where L10 forms an elongated spine to which 2 to 4 L12 dimers bind in a sequential fashion. Binds GTP-bound translation factors.

Functionally, forms part of the ribosomal stalk which helps the ribosome interact with GTP-bound translation factors. Is thus essential for accurate translation. This is Large ribosomal subunit protein bL12 from Nostoc punctiforme (strain ATCC 29133 / PCC 73102).